The sequence spans 1484 residues: DNA-directed RNA polymerase subunit beta' (1484 aa).

Zn(2+)-binding residues include cysteine 67, cysteine 69, cysteine 82, and cysteine 85. 3 residues coordinate Mg(2+): aspartate 499, aspartate 501, and aspartate 503. Residues cysteine 867, cysteine 943, cysteine 950, and cysteine 953 each contribute to the Zn(2+) site.

The protein belongs to the RNA polymerase beta' chain family. In terms of assembly, the RNAP catalytic core consists of 2 alpha, 1 beta, 1 beta' and 1 omega subunit. When a sigma factor is associated with the core the holoenzyme is formed, which can initiate transcription. Requires Mg(2+) as cofactor. Zn(2+) is required as a cofactor.

The catalysed reaction is RNA(n) + a ribonucleoside 5'-triphosphate = RNA(n+1) + diphosphate. In terms of biological role, DNA-dependent RNA polymerase catalyzes the transcription of DNA into RNA using the four ribonucleoside triphosphates as substrates. The polypeptide is DNA-directed RNA polymerase subunit beta' (Chlorobium phaeovibrioides (strain DSM 265 / 1930) (Prosthecochloris vibrioformis (strain DSM 265))).